The sequence spans 205 residues: MSIMAYNGGACIVMVGKNCVAIASDLRFGIQQQTISNDFPKVYRINDKCFVGISGLVTDAQTLYQKLVFRHNLYKLREERDMSPRVVSNLLTNMLYEKRFGPYFTEPLICGLEGPDNTPFISGMDLIGASVATDDFLVVGTMTPAMYGVCETLYKKDMNEDDLFETISQCMLASLDRDALSGWGAIVHVITPTQVITKKLLGRQD.

The protein belongs to the peptidase T1B family. As to quaternary structure, the 26S proteasome consists of a 20S proteasome core and two 19S regulatory subunits. The 20S proteasome core is composed of 28 subunits that are arranged in four stacked rings, resulting in a barrel-shaped structure. The two end rings are each formed by seven alpha subunits, and the two central rings are each formed by seven beta subunits. The catalytic chamber with the active sites is on the inside of the barrel.

Its subcellular location is the cytoplasm. It localises to the nucleus. Non-catalytic component of the proteasome, a multicatalytic proteinase complex which is characterized by its ability to cleave peptides with Arg, Phe, Tyr, Leu, and Glu adjacent to the leaving group at neutral or slightly basic pH. The proteasome has an ATP-dependent proteolytic activity. The sequence is that of Proteasome subunit beta type-3 (psmB3) from Dictyostelium discoideum (Social amoeba).